The sequence spans 267 residues: L-aspartate dehydrogenase (267 aa).

NAD(+) contacts are provided by Ala-124 and Asn-190. His-218 is an active-site residue.

It belongs to the L-aspartate dehydrogenase family.

It catalyses the reaction L-aspartate + NADP(+) + H2O = oxaloacetate + NH4(+) + NADPH + H(+). The catalysed reaction is L-aspartate + NAD(+) + H2O = oxaloacetate + NH4(+) + NADH + H(+). It participates in cofactor biosynthesis; NAD(+) biosynthesis; iminoaspartate from L-aspartate (dehydrogenase route): step 1/1. Functionally, specifically catalyzes the NAD or NADP-dependent dehydrogenation of L-aspartate to iminoaspartate. The polypeptide is L-aspartate dehydrogenase (Methanocaldococcus jannaschii (strain ATCC 43067 / DSM 2661 / JAL-1 / JCM 10045 / NBRC 100440) (Methanococcus jannaschii)).